A 241-amino-acid polypeptide reads, in one-letter code: Small ribosomal subunit protein uS2 (241 aa).

Belongs to the universal ribosomal protein uS2 family.

The sequence is that of Small ribosomal subunit protein uS2 from Buchnera aphidicola subsp. Cinara cedri (strain Cc).